The sequence spans 1121 residues: RecBCD enzyme subunit RecC (1121 aa).

This sequence belongs to the RecC family. Heterotrimer of RecB, RecC and RecD. All subunits contribute to DNA-binding.

Functionally, a helicase/nuclease that prepares dsDNA breaks (DSB) for recombinational DNA repair. Binds to DSBs and unwinds DNA via a highly rapid and processive ATP-dependent bidirectional helicase activity. Unwinds dsDNA until it encounters a Chi (crossover hotspot instigator) sequence from the 3' direction. Cuts ssDNA a few nucleotides 3' to the Chi site. The properties and activities of the enzyme are changed at Chi. The Chi-altered holoenzyme produces a long 3'-ssDNA overhang and facilitates RecA-binding to the ssDNA for homologous DNA recombination and repair. Holoenzyme degrades any linearized DNA that is unable to undergo homologous recombination. In the holoenzyme this subunit recognizes the wild-type Chi sequence, and when added to isolated RecB increases its ATP-dependent helicase processivity. This is RecBCD enzyme subunit RecC from Haemophilus influenzae (strain ATCC 51907 / DSM 11121 / KW20 / Rd).